A 271-amino-acid chain; its full sequence is Tryptophan synthase alpha chain (271 aa).

Residues E49 and D60 each act as proton acceptor in the active site.

The protein belongs to the TrpA family. In terms of assembly, tetramer of two alpha and two beta chains.

It carries out the reaction (1S,2R)-1-C-(indol-3-yl)glycerol 3-phosphate + L-serine = D-glyceraldehyde 3-phosphate + L-tryptophan + H2O. The protein operates within amino-acid biosynthesis; L-tryptophan biosynthesis; L-tryptophan from chorismate: step 5/5. Its function is as follows. The alpha subunit is responsible for the aldol cleavage of indoleglycerol phosphate to indole and glyceraldehyde 3-phosphate. The polypeptide is Tryptophan synthase alpha chain (Buchnera aphidicola subsp. Schizaphis graminum (strain Sg)).